Consider the following 475-residue polypeptide: Ribulose bisphosphate carboxylase large chain (475 aa).

Positions 1 to 2 (MV) are excised as a propeptide. An N-acetylproline modification is found at Pro-3. At Lys-14 the chain carries N6,N6,N6-trimethyllysine. Residues Asn-123 and Thr-173 each coordinate substrate. Lys-175 serves as the catalytic Proton acceptor. A substrate-binding site is contributed by Lys-177. Mg(2+) is bound by residues Lys-201, Asp-203, and Glu-204. Residue Lys-201 is modified to N6-carboxylysine. His-294 functions as the Proton acceptor in the catalytic mechanism. Substrate contacts are provided by Arg-295, His-327, and Ser-379.

Belongs to the RuBisCO large chain family. Type I subfamily. As to quaternary structure, heterohexadecamer of 8 large chains and 8 small chains. Requires Mg(2+) as cofactor.

The protein resides in the plastid. Its subcellular location is the chloroplast. The catalysed reaction is 2 (2R)-3-phosphoglycerate + 2 H(+) = D-ribulose 1,5-bisphosphate + CO2 + H2O. It catalyses the reaction D-ribulose 1,5-bisphosphate + O2 = 2-phosphoglycolate + (2R)-3-phosphoglycerate + 2 H(+). In terms of biological role, ruBisCO catalyzes two reactions: the carboxylation of D-ribulose 1,5-bisphosphate, the primary event in carbon dioxide fixation, as well as the oxidative fragmentation of the pentose substrate in the photorespiration process. Both reactions occur simultaneously and in competition at the same active site. The protein is Ribulose bisphosphate carboxylase large chain of Stigeoclonium helveticum (Green alga).